A 164-amino-acid chain; its full sequence is Phosphopantetheine adenylyltransferase (164 aa).

Position 9 (serine 9) interacts with substrate. Residues 9 to 10 and histidine 17 contribute to the ATP site; that span reads SF. Lysine 41, leucine 73, and lysine 87 together coordinate substrate. Residues 88-90, glutamate 98, and 123-129 contribute to the ATP site; these read GLR and NSFLSSS.

The protein belongs to the bacterial CoaD family. Homohexamer. The cofactor is Mg(2+).

The protein resides in the cytoplasm. It carries out the reaction (R)-4'-phosphopantetheine + ATP + H(+) = 3'-dephospho-CoA + diphosphate. The protein operates within cofactor biosynthesis; coenzyme A biosynthesis; CoA from (R)-pantothenate: step 4/5. Functionally, reversibly transfers an adenylyl group from ATP to 4'-phosphopantetheine, yielding dephospho-CoA (dPCoA) and pyrophosphate. The protein is Phosphopantetheine adenylyltransferase of Clostridium kluyveri (strain ATCC 8527 / DSM 555 / NBRC 12016 / NCIMB 10680 / K1).